Here is a 116-residue protein sequence, read N- to C-terminus: Large ribosomal subunit protein bL17 (116 aa).

The protein belongs to the bacterial ribosomal protein bL17 family. In terms of assembly, part of the 50S ribosomal subunit. Contacts protein L32.

This chain is Large ribosomal subunit protein bL17, found in Parasynechococcus marenigrum (strain WH8102).